The primary structure comprises 157 residues: Protein-export protein SecB (157 aa).

Belongs to the SecB family. In terms of assembly, homotetramer, a dimer of dimers. One homotetramer interacts with 1 SecA dimer.

The protein resides in the cytoplasm. In terms of biological role, one of the proteins required for the normal export of preproteins out of the cell cytoplasm. It is a molecular chaperone that binds to a subset of precursor proteins, maintaining them in a translocation-competent state. It also specifically binds to its receptor SecA. This Proteus mirabilis (strain HI4320) protein is Protein-export protein SecB.